The sequence spans 408 residues: Leucine aminopeptidase 1 (408 aa).

An N-terminal signal peptide occupies residues 1–16 (MKVSSAIALLLPVVAA). The propeptide occupies 17 to 89 (RFVDSAFEQD…SAQSATTGPA (73 aa)). Asparagine 95, asparagine 108, and asparagine 182 each carry an N-linked (GlcNAc...) asparagine glycan. Histidine 190, aspartate 209, glutamate 248, and aspartate 275 together coordinate Zn(2+). A disulfide bond links cysteine 324 and cysteine 328. Residue histidine 357 coordinates Zn(2+).

Belongs to the peptidase M28 family. M28E subfamily. Monomer. Zn(2+) is required as a cofactor.

The protein resides in the secreted. Extracellular aminopeptidase that allows assimilation of proteinaceous substrates. The polypeptide is Leucine aminopeptidase 1 (LAP1) (Grosmannia clavigera (strain kw1407 / UAMH 11150) (Blue stain fungus)).